A 145-amino-acid chain; its full sequence is 3-hydroxyacyl-[acyl-carrier-protein] dehydratase FabZ (145 aa).

Residue His49 is part of the active site.

This sequence belongs to the thioester dehydratase family. FabZ subfamily.

It is found in the cytoplasm. It catalyses the reaction a (3R)-hydroxyacyl-[ACP] = a (2E)-enoyl-[ACP] + H2O. In terms of biological role, involved in unsaturated fatty acids biosynthesis. Catalyzes the dehydration of short chain beta-hydroxyacyl-ACPs and long chain saturated and unsaturated beta-hydroxyacyl-ACPs. In Rickettsia peacockii (strain Rustic), this protein is 3-hydroxyacyl-[acyl-carrier-protein] dehydratase FabZ.